Reading from the N-terminus, the 469-residue chain is Glutamine synthetase (469 aa).

The 86-residue stretch at 12–97 folds into the GS beta-grasp domain; it reads HDVKWVDLRF…LVCDIIEPST (86 aa). Residues 105-469 enclose the GS catalytic domain; it reads PRNIAKRAEE…PLEYDLYYSV (365 aa). Mg(2+) contacts are provided by E130 and E132. E208 is an ATP binding site. E213 and E221 together coordinate Mg(2+). Residues 265–266 and G266 each bind L-glutamate; that span reads NG. Position 270 (H270) interacts with Mg(2+). ATP contacts are provided by residues 272 to 274 and S274; that span reads HMS. 3 residues coordinate L-glutamate: R322, E328, and R340. ATP-binding residues include R340, R345, and K353. Residue E358 coordinates Mg(2+). Residue R360 participates in L-glutamate binding. Position 398 is an O-AMP-tyrosine (Y398).

It belongs to the glutamine synthetase family. In terms of assembly, oligomer of 12 subunits arranged in the form of two hexameric ring. It depends on Mg(2+) as a cofactor.

It is found in the cytoplasm. The catalysed reaction is L-glutamate + NH4(+) + ATP = L-glutamine + ADP + phosphate + H(+). Its activity is regulated as follows. The activity of this enzyme could be controlled by adenylation under conditions of abundant glutamine. Functionally, catalyzes the ATP-dependent biosynthesis of glutamine from glutamate and ammonia. This chain is Glutamine synthetase, found in Pseudomonas aeruginosa (strain ATCC 15692 / DSM 22644 / CIP 104116 / JCM 14847 / LMG 12228 / 1C / PRS 101 / PAO1).